Consider the following 137-residue polypeptide: Putative pre-16S rRNA nuclease (137 aa).

The protein belongs to the YqgF nuclease family.

The protein resides in the cytoplasm. Functionally, could be a nuclease involved in processing of the 5'-end of pre-16S rRNA. The protein is Putative pre-16S rRNA nuclease of Actinobacillus pleuropneumoniae serotype 7 (strain AP76).